The chain runs to 204 residues: Large ribosomal subunit protein uL22m (204 aa).

The N-terminal 38 residues, 1-38 (MAAVILERLGALWVQNLRGKLALGILPQSHIHTSASLE), are a transit peptide targeting the mitochondrion.

It belongs to the universal ribosomal protein uL22 family. In terms of assembly, component of the mitochondrial ribosome large subunit (39S) which comprises a 16S rRNA and about 50 distinct proteins.

The protein resides in the mitochondrion. The polypeptide is Large ribosomal subunit protein uL22m (MRPL22) (Bos taurus (Bovine)).